A 58-amino-acid chain; its full sequence is Large ribosomal subunit protein uL30 (58 aa).

This sequence belongs to the universal ribosomal protein uL30 family. Part of the 50S ribosomal subunit.

This Wigglesworthia glossinidia brevipalpis protein is Large ribosomal subunit protein uL30.